The following is a 302-amino-acid chain: Methionyl-tRNA formyltransferase (302 aa).

107–110 (SLLP) is a binding site for (6S)-5,6,7,8-tetrahydrofolate.

Belongs to the Fmt family.

It catalyses the reaction L-methionyl-tRNA(fMet) + (6R)-10-formyltetrahydrofolate = N-formyl-L-methionyl-tRNA(fMet) + (6S)-5,6,7,8-tetrahydrofolate + H(+). Attaches a formyl group to the free amino group of methionyl-tRNA(fMet). The formyl group appears to play a dual role in the initiator identity of N-formylmethionyl-tRNA by promoting its recognition by IF2 and preventing the misappropriation of this tRNA by the elongation apparatus. This Leifsonia xyli subsp. xyli (strain CTCB07) protein is Methionyl-tRNA formyltransferase.